The following is a 147-amino-acid chain: MVHFTAEEKSVITGLWGKVNVEETGGQAVGRLLVVYPWTQRFFDSFGNMSSPSAIMGNPKVKAHGKKVLTAFGDAVKNMDNLKGTFAKLSELHCDKLHVDPENFRLLGNMIVIILASHFGGEFTPEVQAAWQKLVAGVATALAHKYH.

The region spanning 3–147 is the Globin domain; sequence HFTAEEKSVI…VATALAHKYH (145 aa). Residue serine 51 is modified to Phosphoserine. Residues histidine 64 and histidine 93 each coordinate heme b.

This sequence belongs to the globin family. Red blood cells.

Hemoglobin epsilon chain is a beta-type chain found in early embryos. The protein is Hemoglobin subunit epsilon (HBE1) of Sus scrofa (Pig).